Reading from the N-terminus, the 363-residue chain is Phospho-N-acetylmuramoyl-pentapeptide-transferase (363 aa).

Transmembrane regions (helical) follow at residues 27–47 (SGCA…PFIA), 76–96 (TMGG…WADL), 97–117 (TNGF…VGFA), 137–157 (LGCE…LTPP), 171–191 (VLLP…TGFG), 202–222 (GLAI…SYLV), 242–262 (LAVF…FNAP), 265–285 (AVFM…AVAV), 292–312 (VLCI…IQIF), and 340–360 (KIVI…LATL).

It belongs to the glycosyltransferase 4 family. MraY subfamily. It depends on Mg(2+) as a cofactor.

It localises to the cell inner membrane. It catalyses the reaction UDP-N-acetyl-alpha-D-muramoyl-L-alanyl-gamma-D-glutamyl-meso-2,6-diaminopimeloyl-D-alanyl-D-alanine + di-trans,octa-cis-undecaprenyl phosphate = di-trans,octa-cis-undecaprenyl diphospho-N-acetyl-alpha-D-muramoyl-L-alanyl-D-glutamyl-meso-2,6-diaminopimeloyl-D-alanyl-D-alanine + UMP. The protein operates within cell wall biogenesis; peptidoglycan biosynthesis. Catalyzes the initial step of the lipid cycle reactions in the biosynthesis of the cell wall peptidoglycan: transfers peptidoglycan precursor phospho-MurNAc-pentapeptide from UDP-MurNAc-pentapeptide onto the lipid carrier undecaprenyl phosphate, yielding undecaprenyl-pyrophosphoryl-MurNAc-pentapeptide, known as lipid I. The protein is Phospho-N-acetylmuramoyl-pentapeptide-transferase of Gluconobacter oxydans (strain 621H) (Gluconobacter suboxydans).